A 297-amino-acid chain; its full sequence is Probable endonuclease 4 (297 aa).

Zn(2+) is bound by residues histidine 68, histidine 109, glutamate 144, aspartate 178, histidine 181, histidine 213, aspartate 226, histidine 228, and glutamate 258.

It belongs to the AP endonuclease 2 family. Zn(2+) serves as cofactor.

It catalyses the reaction Endonucleolytic cleavage to 5'-phosphooligonucleotide end-products.. In terms of biological role, endonuclease IV plays a role in DNA repair. It cleaves phosphodiester bonds at apurinic or apyrimidinic (AP) sites, generating a 3'-hydroxyl group and a 5'-terminal sugar phosphate. The chain is Probable endonuclease 4 from Enterococcus faecalis (strain ATCC 700802 / V583).